The primary structure comprises 274 residues: Large ribosomal subunit protein bL28m (274 aa).

Residues 249–274 (SETEEFGLGQEEDLFMKEEPKPTKMA) form a disordered region. Residues 262–274 (LFMKEEPKPTKMA) show a composition bias toward basic and acidic residues.

This sequence belongs to the bacterial ribosomal protein bL28 family. As to quaternary structure, component of the mitochondrial large ribosomal subunit (mt-LSU). Mature N.crassa 74S mitochondrial ribosomes consist of a small (37S) and a large (54S) subunit. The 37S small subunit contains a 16S ribosomal RNA (16S mt-rRNA) and 32 different proteins. The 54S large subunit contains a 23S rRNA (23S mt-rRNA) and 42 different proteins.

It is found in the mitochondrion. Functionally, component of the mitochondrial ribosome (mitoribosome), a dedicated translation machinery responsible for the synthesis of mitochondrial genome-encoded proteins, including at least some of the essential transmembrane subunits of the mitochondrial respiratory chain. The mitoribosomes are attached to the mitochondrial inner membrane and translation products are cotranslationally integrated into the membrane. The protein is Large ribosomal subunit protein bL28m (mrpl24) of Neurospora crassa (strain ATCC 24698 / 74-OR23-1A / CBS 708.71 / DSM 1257 / FGSC 987).